Here is a 547-residue protein sequence, read N- to C-terminus: CTP synthase (547 aa).

The interval 1–267 (MTKFVFVTGG…AQQTLALLNL (267 aa)) is amidoligase domain. Serine 13 contributes to the CTP binding site. UTP is bound at residue serine 13. ATP contacts are provided by residues 14–19 (SIGKGI) and aspartate 71. Positions 71 and 141 each coordinate Mg(2+). CTP is bound by residues 148–150 (DIE), 188–193 (KTKPTQ), and lysine 224. UTP contacts are provided by residues 188-193 (KTKPTQ) and lysine 224. A Glutamine amidotransferase type-1 domain is found at 292 to 534 (EIALVGKYVQ…VKAAVDHYST (243 aa)). Glycine 354 contacts L-glutamine. Cysteine 381 serves as the catalytic Nucleophile; for glutamine hydrolysis. L-glutamine-binding positions include 382–385 (LGMQ), glutamate 405, and arginine 462. Catalysis depends on residues histidine 507 and glutamate 509.

It belongs to the CTP synthase family. Homotetramer.

It carries out the reaction UTP + L-glutamine + ATP + H2O = CTP + L-glutamate + ADP + phosphate + 2 H(+). It catalyses the reaction L-glutamine + H2O = L-glutamate + NH4(+). The catalysed reaction is UTP + NH4(+) + ATP = CTP + ADP + phosphate + 2 H(+). Its pathway is pyrimidine metabolism; CTP biosynthesis via de novo pathway; CTP from UDP: step 2/2. Its activity is regulated as follows. Allosterically activated by GTP, when glutamine is the substrate; GTP has no effect on the reaction when ammonia is the substrate. The allosteric effector GTP functions by stabilizing the protein conformation that binds the tetrahedral intermediate(s) formed during glutamine hydrolysis. Inhibited by the product CTP, via allosteric rather than competitive inhibition. Functionally, catalyzes the ATP-dependent amination of UTP to CTP with either L-glutamine or ammonia as the source of nitrogen. Regulates intracellular CTP levels through interactions with the four ribonucleotide triphosphates. The sequence is that of CTP synthase from Rippkaea orientalis (strain PCC 8801 / RF-1) (Cyanothece sp. (strain PCC 8801)).